We begin with the raw amino-acid sequence, 160 residues long: Small ribosomal subunit protein bS6 (160 aa).

The protein belongs to the bacterial ribosomal protein bS6 family.

Its function is as follows. Binds together with bS18 to 16S ribosomal RNA. In Ureaplasma urealyticum serovar 10 (strain ATCC 33699 / Western), this protein is Small ribosomal subunit protein bS6.